A 165-amino-acid polypeptide reads, in one-letter code: MSHPALTQLRALRYFDAIPALEPHLLDWLLLEDSMTKRFEQQGKRVSVTLIREAFVDQSEVEEASGLLPSESRYWLREILLCADGEPWLAGRTVVPESTLCGPEQVLQHLGKTPLGRYLFTSSTLTRDFIEIGRDATLWGRRSRLRLSGKPLLLTELFLPASPLY.

Substrate contacts are provided by methionine 35, arginine 77, leucine 115, and glutamate 156.

Belongs to the UbiC family. Monomer.

It is found in the cytoplasm. The enzyme catalyses chorismate = 4-hydroxybenzoate + pyruvate. It participates in cofactor biosynthesis; ubiquinone biosynthesis. In terms of biological role, removes the pyruvyl group from chorismate, with concomitant aromatization of the ring, to provide 4-hydroxybenzoate (4HB) for the ubiquinone pathway. The polypeptide is Chorismate pyruvate-lyase (Salmonella gallinarum (strain 287/91 / NCTC 13346)).